The primary structure comprises 1230 residues: MATKFTKNQQRAIEEKGHNILVAASAGSGKTTVLIERLIQKILSGVSVEKFLIVTFTNAAAKEMRERLEVAIEKRLKVADESQKRFLQEQLLILPAANISTIDAYALRIIEMYYHIIGLDPQFRLLSDTAERKLLQQDVLTDVLADFYDENNIHHEQFLTLVNNFGNPNQDDQLQKIILKLSDFAEARADGNEWLEKLREPYEVTGEPLTATALYVRSIRPIILEIIKNLIKKVEEVQLTITGIDELKKTQDAFLEIQDYLLLIQDKAMVAPWDELREAILDTPSGKINSQTKAIKEDPDLSATLEVARQIKGQVVGVKSQMNSLITSYFALDEKSWQLVQKESYKLIDTLILVTQAFRESFRRTKREEKLLDFPDLGTLALAILSDDVTKQTIQGQFDEILVDEYQDINQLQETLLTSVSNGHNMYMVGDVKQSIYGFRQAEPSLFTNKYKQFAKKESDDIRIDLADNFRSQNNVTNITNLIFTQIMDETLGDIAYAGEAKLVPKAAYPDDVPAVFHMDIIVEDAEEDLETDTEVFEKRQAQYALLAERILKLRETSIFDRKADPAGLRPVEYSDIAILTRAKSGYIDLVSTLRAAGIPVQVEGVGNYFQTMEVYLMLDILRVIDNPHQDIPLAAVLRSPVFNFDENELAAIRIADKMHDYWTALQAYAQQDQKAQNFLNLIEKWHAIATQNDLVALIWAIYDDTAWLDYVAGMPGGAQRQANLHALYEYARTYQNNTHSGLFRFIRYIEQLQSGDSDLGEAAQETDAQAVRIMTIHASKGLEFPIVFLPEFDKSFNTQDLKGGLLIQKNEGIGVEYIQPDALVMIPTLQKLVVQQALKRQSWSEEMRLLYVALTRAEQQLYIVGSVKVKGEAGNQSLKSLWQQSKNANGQFLPEFLRLQADSYLKWTIMSLARTKNKVLEDWLGDGQLPRLVGSETPLTGKVAVTLTNQNEIHAPIASTKGSELVEDGTYSPMDFDRAKTILNYQYANLQATQTAAYQSVSEIKQIFEDPDLAQMQTAVITENGQLQPANVLKVDELPLPDFMNDGSQKPSSSAVGTATHLILQLIDFTKINTVQSIEKLRDELVENKRILPSVAPLIEIDEILAFLQSDFAKQIIAHQKTLHREATFAMIMPANDIYDTLEDSAPVLIHGIIDGYFVDEASQTITLFDYKTDFVRNAQIDEDLTKLQARYKGQLHLYQQALQREYVGYQVGDPQLIALNVGRVISVK.

The UvrD-like helicase ATP-binding domain maps to 3–473 (TKFTKNQQRA…IDLADNFRSQ (471 aa)). 24-31 (ASAGSGKT) is an ATP binding site. One can recognise a UvrD-like helicase C-terminal domain in the interval 500 to 782 (EAKLVPKAAY…RIMTIHASKG (283 aa)).

It belongs to the helicase family. AddA subfamily. As to quaternary structure, heterodimer of AddA and AddB/RexB. Mg(2+) is required as a cofactor.

The catalysed reaction is Couples ATP hydrolysis with the unwinding of duplex DNA by translocating in the 3'-5' direction.. The enzyme catalyses ATP + H2O = ADP + phosphate + H(+). The heterodimer acts as both an ATP-dependent DNA helicase and an ATP-dependent, dual-direction single-stranded exonuclease. Recognizes the chi site generating a DNA molecule suitable for the initiation of homologous recombination. The AddA nuclease domain is required for chi fragment generation; this subunit has the helicase and 3' -&gt; 5' nuclease activities. The polypeptide is ATP-dependent helicase/nuclease subunit A (Leuconostoc mesenteroides subsp. mesenteroides (strain ATCC 8293 / DSM 20343 / BCRC 11652 / CCM 1803 / JCM 6124 / NCDO 523 / NBRC 100496 / NCIMB 8023 / NCTC 12954 / NRRL B-1118 / 37Y)).